We begin with the raw amino-acid sequence, 173 residues long: CKLF-like MARVEL transmembrane domain-containing protein 8 (173 aa).

The 133-residue stretch at 36-168 folds into the MARVEL domain; it reads FLRTPPGLLI…NTYFSFIAWR (133 aa). 4 consecutive transmembrane segments (helical) span residues 41-61, 70-90, 105-125, and 147-167; these read PGLL…LIAG, FGWV…FLIV, TTVG…AAIV, and FFAF…FIAW.

Belongs to the chemokine-like factor family.

The protein resides in the membrane. In Mus musculus (Mouse), this protein is CKLF-like MARVEL transmembrane domain-containing protein 8 (Cmtm8).